Reading from the N-terminus, the 208-residue chain is N-(5'-phosphoribosyl)anthranilate isomerase (208 aa).

It belongs to the TrpF family.

The enzyme catalyses N-(5-phospho-beta-D-ribosyl)anthranilate = 1-(2-carboxyphenylamino)-1-deoxy-D-ribulose 5-phosphate. The protein operates within amino-acid biosynthesis; L-tryptophan biosynthesis; L-tryptophan from chorismate: step 3/5. The protein is N-(5'-phosphoribosyl)anthranilate isomerase of Pyrococcus furiosus (strain ATCC 43587 / DSM 3638 / JCM 8422 / Vc1).